A 314-amino-acid chain; its full sequence is Olfactory receptor 1E1 (314 aa).

Over 1-25 (MMGQNQTSISDFLLLGLPIQPEQQN) the chain is Extracellular. N5 carries N-linked (GlcNAc...) asparagine glycosylation. The chain crosses the membrane as a helical span at residues 26 to 49 (LCYALFLAMYLTTLLGNLLIIVLI). Topologically, residues 50–57 (RLDSHLHT) are cytoplasmic. Residues 58-79 (PMYLFLSNLSFSDLCFSSVTIP) traverse the membrane as a helical segment. The Extracellular portion of the chain corresponds to 80 to 100 (KLLQNMQNQDPSIPYADCLTQ). The helical transmembrane segment at 101-120 (MYFFLLFGDLESFLLVAMAY) threads the bilayer. Residues 121 to 139 (DRYVAICFPLHYTAIMSPM) are Cytoplasmic-facing. A helical membrane pass occupies residues 140-158 (LCLALVALSWVLTTFHAML). Residues 159 to 195 (HTLLMARLCFCADNVIPHFFCDMSALLKLAFSDTRVN) lie on the Extracellular side of the membrane. A helical membrane pass occupies residues 196–219 (EWVIFIMGGLILVIPFLLILGSYA). Residues 220-236 (RIVSSILKVPSSKGICK) lie on the Cytoplasmic side of the membrane. The helical transmembrane segment at 237–259 (AFSTCGSHLSVVSLFYGTVIGLY) threads the bilayer. At 260–272 (LCSSANSSTLKDT) the chain is on the extracellular side. Residues 273–292 (VMAMMYTVVTPMLNPFIYSL) traverse the membrane as a helical segment. Topologically, residues 293-314 (RNRDMKGALSRVIHQKKTFFSL) are cytoplasmic.

It belongs to the G-protein coupled receptor 1 family.

Its subcellular location is the cell membrane. Functionally, odorant receptor. This Homo sapiens (Human) protein is Olfactory receptor 1E1 (OR1E1).